A 640-amino-acid polypeptide reads, in one-letter code: Threonine--tRNA ligase (640 aa).

The region spanning 1–61 (MPAITLPDGS…DADARLRFIT (61 aa)) is the TGS domain. The tract at residues 243-536 (DHRKIGRQMD…LIENCAGRFP (294 aa)) is catalytic. Zn(2+) contacts are provided by Cys-336, His-387, and His-513.

Belongs to the class-II aminoacyl-tRNA synthetase family. Homodimer. Zn(2+) serves as cofactor.

It localises to the cytoplasm. The catalysed reaction is tRNA(Thr) + L-threonine + ATP = L-threonyl-tRNA(Thr) + AMP + diphosphate + H(+). Its function is as follows. Catalyzes the attachment of threonine to tRNA(Thr) in a two-step reaction: L-threonine is first activated by ATP to form Thr-AMP and then transferred to the acceptor end of tRNA(Thr). Also edits incorrectly charged L-seryl-tRNA(Thr). The chain is Threonine--tRNA ligase from Acidiphilium cryptum (strain JF-5).